We begin with the raw amino-acid sequence, 401 residues long: uncharacterized protein (401 aa).

This is an uncharacterized protein from Mycobacterium tuberculosis (strain CDC 1551 / Oshkosh).